Consider the following 198-residue polypeptide: Recombination protein RecR (198 aa).

A C4-type zinc finger spans residues 57–72 (CAQCRTLTEHSLCEYC). The Toprim domain occupies 80–175 (SLLCIVESPA…RTTRIAHGIP (96 aa)).

This sequence belongs to the RecR family.

Its function is as follows. May play a role in DNA repair. It seems to be involved in an RecBC-independent recombinational process of DNA repair. It may act with RecF and RecO. The sequence is that of Recombination protein RecR from Methylococcus capsulatus (strain ATCC 33009 / NCIMB 11132 / Bath).